Consider the following 37-residue polypeptide: uncharacterized protein (37 aa).

A signal peptide spans 1–23 (MLNFSLCLYPVFILNKLVLRTQS).

It belongs to the orthopoxviruses VACWR204.5 protein family.

This is an uncharacterized protein from Vaccinia virus (strain Western Reserve) (VACV).